A 125-amino-acid polypeptide reads, in one-letter code: Ribonuclease P protein component (125 aa).

The protein belongs to the RnpA family. As to quaternary structure, consists of a catalytic RNA component (M1 or rnpB) and a protein subunit.

It carries out the reaction Endonucleolytic cleavage of RNA, removing 5'-extranucleotides from tRNA precursor.. Functionally, RNaseP catalyzes the removal of the 5'-leader sequence from pre-tRNA to produce the mature 5'-terminus. It can also cleave other RNA substrates such as 4.5S RNA. The protein component plays an auxiliary but essential role in vivo by binding to the 5'-leader sequence and broadening the substrate specificity of the ribozyme. This chain is Ribonuclease P protein component, found in Rhodococcus jostii (strain RHA1).